A 601-amino-acid chain; its full sequence is Elongation factor 4 (601 aa).

In terms of domain architecture, tr-type G spans 8 to 189 (EQIRNFGIIA…LIVRKAPPPK (182 aa)). 20 to 25 (DHGKST) serves as a coordination point for GTP.

The protein belongs to the TRAFAC class translation factor GTPase superfamily. Classic translation factor GTPase family. LepA subfamily.

The protein resides in the cell membrane. It catalyses the reaction GTP + H2O = GDP + phosphate + H(+). In terms of biological role, required for accurate and efficient protein synthesis under certain stress conditions. May act as a fidelity factor of the translation reaction, by catalyzing a one-codon backward translocation of tRNAs on improperly translocated ribosomes. Back-translocation proceeds from a post-translocation (POST) complex to a pre-translocation (PRE) complex, thus giving elongation factor G a second chance to translocate the tRNAs correctly. Binds to ribosomes in a GTP-dependent manner. The protein is Elongation factor 4 of Tropheryma whipplei (strain Twist) (Whipple's bacillus).